Here is a 514-residue protein sequence, read N- to C-terminus: 2,3-bisphosphoglycerate-independent phosphoglycerate mutase (514 aa).

Mn(2+) is bound by residues Asp13 and Ser69. The active-site Phosphoserine intermediate is Ser69. Residues His128, 158–159 (RD), Arg189, Arg195, 263–266 (RADR), and Lys336 contribute to the substrate site. Mn(2+) contacts are provided by Asp402, His406, Asp443, His444, and His461.

Belongs to the BPG-independent phosphoglycerate mutase family. Monomer. The cofactor is Mn(2+).

The catalysed reaction is (2R)-2-phosphoglycerate = (2R)-3-phosphoglycerate. The protein operates within carbohydrate degradation; glycolysis; pyruvate from D-glyceraldehyde 3-phosphate: step 3/5. In terms of biological role, catalyzes the interconversion of 2-phosphoglycerate and 3-phosphoglycerate. This is 2,3-bisphosphoglycerate-independent phosphoglycerate mutase from Akkermansia muciniphila (strain ATCC BAA-835 / DSM 22959 / JCM 33894 / BCRC 81048 / CCUG 64013 / CIP 107961 / Muc).